The sequence spans 469 residues: ATP-dependent protease ATPase subunit HslU (469 aa).

ATP is bound by residues Ile-21, 63–68, Asp-282, Glu-347, and Arg-419; that span reads GVGKTE.

It belongs to the ClpX chaperone family. HslU subfamily. In terms of assembly, a double ring-shaped homohexamer of HslV is capped on each side by a ring-shaped HslU homohexamer. The assembly of the HslU/HslV complex is dependent on binding of ATP.

Its subcellular location is the cytoplasm. ATPase subunit of a proteasome-like degradation complex; this subunit has chaperone activity. The binding of ATP and its subsequent hydrolysis by HslU are essential for unfolding of protein substrates subsequently hydrolyzed by HslV. HslU recognizes the N-terminal part of its protein substrates and unfolds these before they are guided to HslV for hydrolysis. In Petrotoga mobilis (strain DSM 10674 / SJ95), this protein is ATP-dependent protease ATPase subunit HslU.